The chain runs to 150 residues: 3-dehydroquinate dehydratase (150 aa).

The Proton acceptor role is filled by Tyr-22. Positions 73, 79, and 86 each coordinate substrate. The active-site Proton donor is His-99. Residues 100–101 (LT) and Arg-110 contribute to the substrate site.

This sequence belongs to the type-II 3-dehydroquinase family. As to quaternary structure, homododecamer.

The enzyme catalyses 3-dehydroquinate = 3-dehydroshikimate + H2O. It participates in metabolic intermediate biosynthesis; chorismate biosynthesis; chorismate from D-erythrose 4-phosphate and phosphoenolpyruvate: step 3/7. In terms of biological role, catalyzes a trans-dehydration via an enolate intermediate. In Desulforudis audaxviator (strain MP104C), this protein is 3-dehydroquinate dehydratase.